Here is a 158-residue protein sequence, read N- to C-terminus: UPF0735 ACT domain-containing protein Bsph_3944 (158 aa).

Positions 80–155 constitute an ACT domain; that stretch reads TVFLQLQDRK…FVESAEVISS (76 aa).

The protein belongs to the UPF0735 family.

This chain is UPF0735 ACT domain-containing protein Bsph_3944, found in Lysinibacillus sphaericus (strain C3-41).